The primary structure comprises 242 residues: MRCFKATIAYDGAYFLGYAKQPNKLGVQDKIENALNTLGIKSVVVAAGRTDKGVHANNQVLSFHAPKHWNVAKLFYYLAPKLAPHIVLKKLEEKNFHARFDAQKRAYRYLLTKNLKTPFLAPYIACGDYGSLDLLNSALKQFTGKHDFSLFKKEGGATTNPNRIIFNAFAYTAFIMGHECVVFKIIGDAFLRSSVRLIIQTCVQYSLEKITLAEIEMQIHNIKATIRTPIMADGLYLHRVYY.

D51 (nucleophile) is an active-site residue. Position 107 (Y107) interacts with substrate.

This sequence belongs to the tRNA pseudouridine synthase TruA family. Homodimer.

It carries out the reaction uridine(38/39/40) in tRNA = pseudouridine(38/39/40) in tRNA. Formation of pseudouridine at positions 38, 39 and 40 in the anticodon stem and loop of transfer RNAs. The chain is tRNA pseudouridine synthase A from Helicobacter pylori (strain HPAG1).